We begin with the raw amino-acid sequence, 181 residues long: Translation initiation factor IF-3 (181 aa).

It belongs to the IF-3 family. As to quaternary structure, monomer.

Its subcellular location is the cytoplasm. Functionally, IF-3 binds to the 30S ribosomal subunit and shifts the equilibrium between 70S ribosomes and their 50S and 30S subunits in favor of the free subunits, thus enhancing the availability of 30S subunits on which protein synthesis initiation begins. The chain is Translation initiation factor IF-3 from Mycoplasma mycoides subsp. mycoides SC (strain CCUG 32753 / NCTC 10114 / PG1).